Consider the following 83-residue polypeptide: U-actitoxin-Aeq6a (83 aa).

An N-terminal signal peptide occupies residues 1-20 (MIYKAVFVCLVLVLLGDVFC). A propeptide spanning residues 21 to 36 (SPRNSGGGTLNDNPFE) is cleaved from the precursor. A Proline amide modification is found at Pro82.

In terms of processing, contains 3 disulfide bonds. In terms of tissue distribution, expressed by acrorhagi.

It is found in the secreted. It localises to the nematocyst. Its function is as follows. Toxin. The protein is U-actitoxin-Aeq6a of Actinia equina (Beadlet anemone).